Here is a 222-residue protein sequence, read N- to C-terminus: Ubiquitin-conjugating enzyme E2 S (222 aa).

At Met1 the chain carries N-acetylmethionine. One can recognise a UBC core domain in the interval 11–157 (HIIRLVYKEV…ARLLTEIHGG (147 aa)). Residue Cys95 is the Glycyl thioester intermediate of the active site. The interval 156–222 (GGAGGPSGRA…TDKKRALRRL (67 aa)) is disordered. Ser173 bears the Phosphoserine mark. The segment covering 208 to 222 (AAKKKTDKKRALRRL) has biased composition (basic residues).

This sequence belongs to the ubiquitin-conjugating enzyme family. In terms of assembly, component of the APC/C complex, composed of at least 14 distinct subunits that assemble into a complex of at least 19 chains with a combined molecular mass of around 1.2 MDa. Within this complex, directly interacts with ANAPC2 and ANAPC4. Interacts with CDC20, FZR1/CDH1 and VHL. Autoubiquitinated by the APC/C complex during G1, leading to its degradation by the proteasome.

It catalyses the reaction S-ubiquitinyl-[E1 ubiquitin-activating enzyme]-L-cysteine + [E2 ubiquitin-conjugating enzyme]-L-cysteine = [E1 ubiquitin-activating enzyme]-L-cysteine + S-ubiquitinyl-[E2 ubiquitin-conjugating enzyme]-L-cysteine.. Its pathway is protein modification; protein ubiquitination. Accepts ubiquitin from the E1 complex and catalyzes its covalent attachment to other proteins. Catalyzes 'Lys-11'-linked polyubiquitination. Acts as an essential factor of the anaphase promoting complex/cyclosome (APC/C), a cell cycle-regulated ubiquitin ligase that controls progression through mitosis. Acts by specifically elongating 'Lys-11'-linked polyubiquitin chains initiated by the E2 enzyme UBE2C/UBCH10 on APC/C substrates, enhancing the degradation of APC/C substrates by the proteasome and promoting mitotic exit. Also acts by elongating ubiquitin chains initiated by the E2 enzyme UBE2D1/UBCH5 in vitro; it is however unclear whether UBE2D1/UBCH5 acts as an E2 enzyme for the APC/C in vivo. Also involved in ubiquitination and subsequent degradation of VHL, resulting in an accumulation of HIF1A. In vitro able to promote polyubiquitination using all 7 ubiquitin Lys residues, except 'Lys-48'-linked polyubiquitination. The polypeptide is Ubiquitin-conjugating enzyme E2 S (UBE2S) (Homo sapiens (Human)).